Here is a 197-residue protein sequence, read N- to C-terminus: Lipid A acyltransferase PagP (197 aa).

The signal sequence occupies residues 1-24 (MMFFKRTILACTVALLFPALPSYA). Catalysis depends on residues H69, D112, and S113.

It belongs to the lipid A palmitoyltransferase family. In terms of assembly, homodimer.

It localises to the cell outer membrane. The catalysed reaction is a lipid A + a 1,2-diacyl-sn-glycero-3-phosphocholine = a hepta-acyl lipid A + a 2-acyl-sn-glycero-3-phosphocholine. It carries out the reaction a lipid IVA + a 1,2-diacyl-sn-glycero-3-phosphocholine = a lipid IVB + a 2-acyl-sn-glycero-3-phosphocholine. The enzyme catalyses a lipid IIA + a 1,2-diacyl-sn-glycero-3-phosphocholine = a lipid IIB + a 2-acyl-sn-glycero-3-phosphocholine. Its function is as follows. Transfers a fatty acid residue from the sn-1 position of a phospholipid to the N-linked hydroxyfatty acid chain on the proximal unit of lipid A or its precursors. The polypeptide is Lipid A acyltransferase PagP (Serratia proteamaculans (strain 568)).